Reading from the N-terminus, the 272-residue chain is Cholesterol 25-hydroxylase (272 aa).

Residue asparagine 5 is glycosylated (N-linked (GlcNAc...) asparagine). The next 3 helical transmembrane spans lie at 38–58 (FFPV…FVVL), 84–104 (LLPC…PVTL), and 121–141 (LLLL…EFFV). In terms of domain architecture, Fatty acid hydroxylase spans 129–263 (LFCLLLFDME…FTHWDKILGT (135 aa)). Positions 142–146 (WHLLH) match the Histidine box-1 motif. The short motif at 157–161 (HKVHH) is the Histidine box-2 element. Asparagine 163 and asparagine 189 each carry an N-linked (GlcNAc...) asparagine glycan. Residues 238–244 (HHDLHHS) carry the Histidine box-3 motif.

The protein belongs to the sterol desaturase family. Fe cation serves as cofactor. In terms of processing, N-glycosylated.

The protein localises to the endoplasmic reticulum membrane. The enzyme catalyses cholesterol + AH2 + O2 = 25-hydroxycholesterol + A + H2O. It carries out the reaction cholesterol + NADPH + O2 + H(+) = 25-hydroxycholesterol + NADP(+) + H2O. In terms of biological role, catalyzes the formation of 25-hydroxycholesterol from cholesterol, leading to repress cholesterol biosynthetic enzymes. Plays a key role in cell positioning and movement in lymphoid tissues: 25-hydroxycholesterol is an intermediate in biosynthesis of 7-alpha,25-dihydroxycholesterol (7-alpha,25-OHC), an oxysterol that acts as a ligand for the G protein-coupled receptor GPR183/EBI2, a chemotactic receptor for a number of lymphoid cells. May play an important role in regulating lipid metabolism by synthesizing a corepressor that blocks sterol regulatory element binding protein (SREBP) processing. As an interferon-stimulated gene, has broad antiviral activities against a wide range of enveloped viruses, such as vesicular stomatitis virus (VSV) and SARS coronavirus-2 (SARS-CoV-2). Its product, 25-hydroxycholesterol, activates the ER-localized enzyme ACAT to induce internalization of accessible cholesterol on the plasma membrane and restricts SARS-CoV-2 S protein-mediated fusion which inhibits virus replication. In testis, production of 25-hydroxycholesterol by macrophages plays a role in Leydig cell differentiation. Required to restrain inflammation in macrophages: production of 25-hydroxycholesterol protects macrophages from cholesterol overload, thereby preventing mitochondrial DNA release and subsequent activation of the AIM2 inflammasome. This Homo sapiens (Human) protein is Cholesterol 25-hydroxylase.